Here is a 337-residue protein sequence, read N- to C-terminus: Fructose-1,6-bisphosphatase class 1 (337 aa).

Residues E89, D112, L114, and D115 each coordinate Mg(2+). Residues 115–118, N208, Y241, and K271 contribute to the substrate site; that span reads DGSS. E277 provides a ligand contact to Mg(2+).

Belongs to the FBPase class 1 family. Homotetramer. Mg(2+) serves as cofactor.

Its subcellular location is the cytoplasm. The catalysed reaction is beta-D-fructose 1,6-bisphosphate + H2O = beta-D-fructose 6-phosphate + phosphate. Its pathway is carbohydrate biosynthesis; gluconeogenesis. This Yersinia pestis bv. Antiqua (strain Antiqua) protein is Fructose-1,6-bisphosphatase class 1.